A 266-amino-acid polypeptide reads, in one-letter code: Gasdermin bGSDM (266 aa).

A lipid anchor (S-palmitoyl cysteine) is attached at cysteine 3. The next 4 membrane-spanning stretches (beta stranded) occupy residues 69-85 (ISGQ…GLSI), 97-115 (KLGL…FEFQ), 163-180 (KFTI…ELTI), and 189-205 (GNVK…KICY).

This sequence belongs to the bacterial gasdermin family. Monomer. In terms of assembly, forms large, homooligomeric ring-shaped pores when inserted in membranes. Post-translationally, palmitoylation helps stabilize the inactive state; may self palmitoylate. Palmitoylation plays a significant role in pore formation.

The protein resides in the cytoplasm. It is found in the cell inner membrane. Its activity is regulated as follows. The full-length protein before cleavage is inactive: intramolecular interactions between the N-terminal domain and the C-terminal region as well as the lipid modification, mediate autoinhibition. The pyroptosis-like-inducing activity is carried by the released N-terminal domain (Gasdermin bGSDM, N-terminus). In terms of biological role, precursor of a pore-forming protein involved in defense against bacteriophages. Expression of bGSDM and the neighboring protease gene (Ga0182885_104520) is toxic in E.coli. Cleavage of this precursor by its dedicated protease releases the active moiety (gasdermin bGSDM, N-terminus) which inserts into membranes, forming pores and triggering cell death. Pore-forming protein that causes membrane permeabilization via a pyroptosis-like activity. Makes ring-like pores when released. This is Gasdermin bGSDM from Desulfuromonadales bacterium.